The primary structure comprises 314 residues: Methionyl-tRNA formyltransferase (314 aa).

113–116 (SLLP) provides a ligand contact to (6S)-5,6,7,8-tetrahydrofolate.

Belongs to the Fmt family.

The catalysed reaction is L-methionyl-tRNA(fMet) + (6R)-10-formyltetrahydrofolate = N-formyl-L-methionyl-tRNA(fMet) + (6S)-5,6,7,8-tetrahydrofolate + H(+). Functionally, attaches a formyl group to the free amino group of methionyl-tRNA(fMet). The formyl group appears to play a dual role in the initiator identity of N-formylmethionyl-tRNA by promoting its recognition by IF2 and preventing the misappropriation of this tRNA by the elongation apparatus. This is Methionyl-tRNA formyltransferase from Serratia proteamaculans (strain 568).